The sequence spans 871 residues: Zinc finger protein 473 (871 aa).

In terms of domain architecture, KRAB spans 6–75; sequence VTLKDVGMDF…AGGSPEATSP (70 aa). 2 disordered regions span residues 47 to 81 and 140 to 164; these read PPRP…TETK and NGES…TVST. The span at 71 to 81 shows a compositional bias: polar residues; the sequence is EATSPDVTETK. The segment covering 145–154 has biased composition (basic and acidic residues); sequence TECKSHELKR. K148 participates in a covalent cross-link: Glycyl lysine isopeptide (Lys-Gly) (interchain with G-Cter in SUMO2). The segment at 209 to 231 adopts a C2H2-type 1 zinc-finger fold; the sequence is YQCSECGKSFSGSYRLTQHWITH. The C2H2-type 2; degenerate zinc finger occupies 265–286; the sequence is YVCNEYGTTFSQSTYLWHQKTH. The span at 290–317 shows a compositional bias: basic and acidic residues; that stretch reads KPCKSQDSDHPPSHDTQPGEHQKTHTDS. Residues 290-318 are disordered; the sequence is KPCKSQDSDHPPSHDTQPGEHQKTHTDSK. The tract at residues 312 to 552 is interaction with SLBP/pre-mRNA complex; sequence KTHTDSKSYN…GFFVSGKILD (241 aa). 3 consecutive C2H2-type zinc fingers follow at residues 320-342, 347-369, and 375-397; these read YNCN…QKIH, YECS…QKTH, and SECQ…QALH. The C2H2-type 6; degenerate zinc finger occupies 403 to 425; sequence YKCNERGKSFRHNSTLKIHQRVH. Residue K419 forms a Glycyl lysine isopeptide (Lys-Gly) (interchain with G-Cter in SUMO2) linkage. 4 consecutive C2H2-type zinc fingers follow at residues 431 to 453, 459 to 481, 487 to 509, and 515 to 537; these read YKCS…RRIH, HKCQ…QAIH, YSCA…QKMH, and YECQ…ESVH. Glycyl lysine isopeptide (Lys-Gly) (interchain with G-Cter in SUMO2) cross-links involve residues K549 and K558. 2 C2H2-type zinc fingers span residues 562–584 and 591–613; these read FKCN…ERIH and FECD…QRIH. A Glycyl lysine isopeptide (Lys-Gly) (interchain with G-Cter in SUMO2) cross-link involves residue K635. 8 consecutive C2H2-type zinc fingers follow at residues 646–668, 674–696, 702–724, 730–752, 758–780, 786–808, 814–836, and 842–864; these read FKCN…QLIH, FKCS…ERTH, LVCN…QRIH, YVCD…QRIH, YVCQ…RRVH, YRCG…QRIH, YSCN…LRVH, and YQCQ…QRVH.

Belongs to the krueppel C2H2-type zinc-finger protein family. Interacts with the SLBP/pre-mRNA complex but not with SLBP alone. Interacts with LSM11 in a U7 snRNP-dependent manner.

The protein localises to the nucleus. Involved in histone 3'-end pre-mRNA processing by associating with U7 snRNP and interacting with SLBP/pre-mRNA complex. Increases histone 3'-end pre-mRNA processing but has no effect on U7 snRNP levels, when overexpressed. Required for cell cycle progression from G1 to S phases. The protein is Zinc finger protein 473 (ZNF473) of Homo sapiens (Human).